The following is a 185-amino-acid chain: ATP synthase subunit b 2 (185 aa).

The disordered stretch occupies residues 1–26 (MAQGHGDAKGTTAHTEAGGGHKAPFP). Residues 37–57 (LVSLAIAFVALYLIVSKIALP) traverse the membrane as a helical segment.

This sequence belongs to the ATPase B chain family. In terms of assembly, F-type ATPases have 2 components, F(1) - the catalytic core - and F(0) - the membrane proton channel. F(1) has five subunits: alpha(3), beta(3), gamma(1), delta(1), epsilon(1). F(0) has three main subunits: a(1), b(2) and c(10-14). The alpha and beta chains form an alternating ring which encloses part of the gamma chain. F(1) is attached to F(0) by a central stalk formed by the gamma and epsilon chains, while a peripheral stalk is formed by the delta and b chains.

It is found in the cell inner membrane. Its function is as follows. F(1)F(0) ATP synthase produces ATP from ADP in the presence of a proton or sodium gradient. F-type ATPases consist of two structural domains, F(1) containing the extramembraneous catalytic core and F(0) containing the membrane proton channel, linked together by a central stalk and a peripheral stalk. During catalysis, ATP synthesis in the catalytic domain of F(1) is coupled via a rotary mechanism of the central stalk subunits to proton translocation. In terms of biological role, component of the F(0) channel, it forms part of the peripheral stalk, linking F(1) to F(0). The b'-subunit is a diverged and duplicated form of b found in plants and photosynthetic bacteria. This chain is ATP synthase subunit b 2 (atpF2), found in Rhodopseudomonas palustris (strain ATCC BAA-98 / CGA009).